The sequence spans 332 residues: Glycerol-3-phosphate dehydrogenase [NAD(P)+] (332 aa).

NADPH is bound by residues serine 11, phenylalanine 12, lysine 32, and lysine 106. Sn-glycerol 3-phosphate contacts are provided by lysine 106, glycine 137, and serine 139. NADPH is bound at residue alanine 141. The sn-glycerol 3-phosphate site is built by lysine 192, aspartate 245, serine 255, arginine 256, and asparagine 257. The Proton acceptor role is filled by lysine 192. Residue arginine 256 coordinates NADPH. NADPH-binding residues include valine 280 and glutamate 282.

This sequence belongs to the NAD-dependent glycerol-3-phosphate dehydrogenase family.

It localises to the cytoplasm. It carries out the reaction sn-glycerol 3-phosphate + NAD(+) = dihydroxyacetone phosphate + NADH + H(+). The catalysed reaction is sn-glycerol 3-phosphate + NADP(+) = dihydroxyacetone phosphate + NADPH + H(+). It functions in the pathway membrane lipid metabolism; glycerophospholipid metabolism. Functionally, catalyzes the reduction of the glycolytic intermediate dihydroxyacetone phosphate (DHAP) to sn-glycerol 3-phosphate (G3P), the key precursor for phospholipid synthesis. The sequence is that of Glycerol-3-phosphate dehydrogenase [NAD(P)+] from Staphylococcus aureus (strain Mu3 / ATCC 700698).